A 1556-amino-acid polypeptide reads, in one-letter code: Pentafunctional AROM polypeptide (1556 aa).

Residues 1-387 are 3-dehydroquinate synthase; that stretch reads MFAEGQIQKV…HEQKASSVAD (387 aa). NAD(+) contacts are provided by residues 46-48, 84-87, 115-117, and Asp120; these read DTN, ETSK, and GGV. Arg131 is a binding site for 7-phospho-2-dehydro-3-deoxy-D-arabino-heptonate. Position 140 to 141 (140 to 141) interacts with NAD(+); that stretch reads TT. 7-phospho-2-dehydro-3-deoxy-D-arabino-heptonate is bound by residues Asp147 and Lys153. An NAD(+)-binding site is contributed by Lys162. Residue Asn163 coordinates 7-phospho-2-dehydro-3-deoxy-D-arabino-heptonate. NAD(+) is bound by residues 180–183 and Asn191; that span reads FLET. Glu195 contacts Zn(2+). Residues 195 to 198 and Lys253 each bind 7-phospho-2-dehydro-3-deoxy-D-arabino-heptonate; that span reads EVIK. Glu263 acts as the Proton acceptor; for 3-dehydroquinate synthase activity in catalysis. 7-phospho-2-dehydro-3-deoxy-D-arabino-heptonate-binding positions include 267-271 and His274; that span reads RNLLN. His274 contributes to the Zn(2+) binding site. Residue His278 is the Proton acceptor; for 3-dehydroquinate synthase activity of the active site. Residues His290 and Lys359 each coordinate 7-phospho-2-dehydro-3-deoxy-D-arabino-heptonate. His290 contacts Zn(2+). Positions 400–837 are EPSP synthase; it reads VGEAPVGDKK…WDVLSGVFNV (438 aa). Cys819 acts as the For EPSP synthase activity in catalysis. Positions 858 to 1049 are shikimate kinase; sequence PSIFIVGMRG…HKDQFTSFLS (192 aa). 864–871 provides a ligand contact to ATP; that stretch reads GMRGAGKT. The 3-dehydroquinase stretch occupies residues 1050 to 1266; sequence LTFPDVSIAA…AAPGQLSVEE (217 aa). His1171 (proton acceptor; for 3-dehydroquinate dehydratase activity) is an active-site residue. The active-site Schiff-base intermediate with substrate; for 3-dehydroquinate dehydratase activity is Lys1200. The interval 1279–1556 is shikimate dehydrogenase; that stretch reads KNLSFFIVGT…EVGEKAVLGN (278 aa).

This sequence in the N-terminal section; belongs to the sugar phosphate cyclases superfamily. Dehydroquinate synthase family. It in the 2nd section; belongs to the EPSP synthase family. The protein in the 3rd section; belongs to the shikimate kinase family. In the 4th section; belongs to the type-I 3-dehydroquinase family. This sequence in the C-terminal section; belongs to the shikimate dehydrogenase family. As to quaternary structure, homodimer. Zn(2+) is required as a cofactor.

It localises to the cytoplasm. It carries out the reaction 7-phospho-2-dehydro-3-deoxy-D-arabino-heptonate = 3-dehydroquinate + phosphate. The catalysed reaction is 3-dehydroquinate = 3-dehydroshikimate + H2O. The enzyme catalyses shikimate + NADP(+) = 3-dehydroshikimate + NADPH + H(+). It catalyses the reaction shikimate + ATP = 3-phosphoshikimate + ADP + H(+). It carries out the reaction 3-phosphoshikimate + phosphoenolpyruvate = 5-O-(1-carboxyvinyl)-3-phosphoshikimate + phosphate. It functions in the pathway metabolic intermediate biosynthesis; chorismate biosynthesis; chorismate from D-erythrose 4-phosphate and phosphoenolpyruvate: step 2/7. Its pathway is metabolic intermediate biosynthesis; chorismate biosynthesis; chorismate from D-erythrose 4-phosphate and phosphoenolpyruvate: step 3/7. The protein operates within metabolic intermediate biosynthesis; chorismate biosynthesis; chorismate from D-erythrose 4-phosphate and phosphoenolpyruvate: step 4/7. It participates in metabolic intermediate biosynthesis; chorismate biosynthesis; chorismate from D-erythrose 4-phosphate and phosphoenolpyruvate: step 5/7. It functions in the pathway metabolic intermediate biosynthesis; chorismate biosynthesis; chorismate from D-erythrose 4-phosphate and phosphoenolpyruvate: step 6/7. In terms of biological role, the AROM polypeptide catalyzes 5 consecutive enzymatic reactions in prechorismate polyaromatic amino acid biosynthesis. This is Pentafunctional AROM polypeptide from Yarrowia lipolytica (strain CLIB 122 / E 150) (Yeast).